Consider the following 331-residue polypeptide: Phosphoribosylformylglycinamidine cyclo-ligase (331 aa).

This sequence belongs to the AIR synthase family.

It localises to the cytoplasm. The enzyme catalyses 2-formamido-N(1)-(5-O-phospho-beta-D-ribosyl)acetamidine + ATP = 5-amino-1-(5-phospho-beta-D-ribosyl)imidazole + ADP + phosphate + H(+). It functions in the pathway purine metabolism; IMP biosynthesis via de novo pathway; 5-amino-1-(5-phospho-D-ribosyl)imidazole from N(2)-formyl-N(1)-(5-phospho-D-ribosyl)glycinamide: step 2/2. This Clostridium botulinum (strain Langeland / NCTC 10281 / Type F) protein is Phosphoribosylformylglycinamidine cyclo-ligase.